Reading from the N-terminus, the 193-residue chain is MAKLYFYYSTMNAGKSTTLLQSSYNYRERDMNTLVYTAAIDDRFGVGKVTSRIGISQDAFLFRSETNLFDEINEHLKKEKVHCVLVDEAQFLSKQQVYQLSDVVDKLKIPVLCYGLRTDFQAELFEGSKYLLAWADQLEELKTICYCGRKANFVLRLNDQGEVIKEGAQIQIGGNDSYLSVCRLHYKEKCGQI.

Residues 9–16 (STMNAGKS) and 87–90 (DEAQ) contribute to the ATP site. E88 acts as the Proton acceptor in catalysis. The Zn(2+) site is built by C145, C147, C182, and H185.

The protein belongs to the thymidine kinase family. Homotetramer.

It is found in the cytoplasm. The enzyme catalyses thymidine + ATP = dTMP + ADP + H(+). The protein is Thymidine kinase of Haemophilus influenzae (strain ATCC 51907 / DSM 11121 / KW20 / Rd).